Reading from the N-terminus, the 153-residue chain is MGLTSQLLPPLFFLLACAGNFVHGHKCDITLQEIIKTLNSLTEQKTLCTKLTITDILAASKNTTEKETFCRAATVLRQFYSHHEKDTRCLGATAQQFHRHKQLIRFLKRLDRNLWGLAGLNSCPVKEANQSTLENFLERLKTIMREKYSKCSS.

The N-terminal stretch at 1–24 is a signal peptide; sequence MGLTSQLLPPLFFLLACAGNFVHG. 3 disulfide bridges follow: C27–C151, C48–C89, and C70–C123. N62 carries N-linked (GlcNAc...) asparagine glycosylation.

Belongs to the IL-4/IL-13 family.

It is found in the secreted. In terms of biological role, participates in at least several B-cell activation processes as well as of other cell types. It is a costimulator of DNA-synthesis. It induces the expression of class II MHC molecules on resting B-cells. It enhances both secretion and cell surface expression of IgE and IgG1. It also regulates the expression of the low affinity Fc receptor for IgE (CD23) on both lymphocytes and monocytes. Positively regulates IL31RA expression in macrophages. Stimulates autophagy in dendritic cells by interfering with mTORC1 signaling and through the induction of RUFY4. This chain is Interleukin-4 (IL4), found in Macaca fascicularis (Crab-eating macaque).